The sequence spans 301 residues: UstYa family oxidase phomYd (301 aa).

The disordered stretch occupies residues 1–26; it reads MEKFFSPSRHNYADLSPTDVPASEES. Residues 47–69 form a helical membrane-spanning segment; the sequence is VLVNRLLAASTVALVMVSLWLGW. 2 short sequence motifs (HXXHC) span residues 189–194 and 218–222; these read THSVHC and HTDHC. N275 carries N-linked (GlcNAc...) asparagine glycosylation.

It belongs to the ustYa family.

Its subcellular location is the membrane. It participates in mycotoxin biosynthesis. UstYa family oxidase; part of the gene cluster that mediates the biosynthesis of the phomopsins, a group of hexapeptide mycotoxins which infects lupins and causes lupinosis disease in livestock. Within the pathway, phomYd catalyzes the desaturation of the Asp moiety into 2,3-dehydroaspartic acid (dAsp). The pathway starts with the processing of the precursor phomA by several endopeptidases including kexin proteases as well as the cluster-specific S41 family peptidase phomP1 and the oligopeptidase phomG to produce 10 identical copies of the hexapeptide Tyr-Val-Ile-Pro-Ile-Asp. After being excised from the precursor peptide, the core peptides are cyclized and modified post-translationally by enzymes encoded within the gene cluster. The timing and order of proteolysis of the phomA precursor and PTMs are still unknown. Two tyrosinase-like enzymes, phomQ1 and phomQ2, catalyze the chlorination and hydroxylation of Tyr, respectively. PhomYb, is proposed to be involved in the construction of the macrocyclic structure. The other 4 ustYa family proteins may be involved in PTMs that generate the unique structure of phomopsin A. PhomYa is required for the hydroxylation of C-beta of Tyr. PhomYc, phomYd, and phomYe are responsible for the biosynthesis of 2,3-dehydroisoleucine (dIle), 2,3-dehydroaspartic acid (dAsp), and 3,4-dehydroproline (dPro), respectively. While dIle formation by phomYc is indispensable for the installation of dAsp by phomYd, the order of the other PTMs have not been elucidated yet. Most of the biosynthetic enzymes likely have broad substrate specificity, and thus, there might be a metabolic grid from a precursor to phomopsin A. The enzyme(s) responsible for the biosynthesis of 3,4-dehydrovaline (dVal) have also not been identified yet. Finally, phomM acts as an S-adenosylmethionine-dependent alpha-N-methyltransferase that catalyzes two successive N-methylation reactions, converting N-desmethyl-phomopsin A to phomopsin A and phomopsin A further to an N,N-dimethylated congener called phomopsin E. This chain is UstYa family oxidase phomYd, found in Diaporthe leptostromiformis (Lupinosis disease fungus).